The primary structure comprises 392 residues: Pectate lyase 3 (392 aa).

Positions 1-25 (MGIKHCCYILYFTLALVTLLQPVRS) are cleaved as a signal peptide. N-linked (GlcNAc...) asparagine glycosylation is present at Asn-37. Cys-54 and Cys-71 are joined by a disulfide. Ca(2+)-binding residues include Asp-194, Asp-218, and Asp-222. Arg-270 is a catalytic residue.

This sequence belongs to the polysaccharide lyase 1 family. Amb a subfamily. Monomer. Ca(2+) serves as cofactor. The N-terminus is blocked. In terms of tissue distribution, pollen and flowers.

The catalysed reaction is Eliminative cleavage of (1-&gt;4)-alpha-D-galacturonan to give oligosaccharides with 4-deoxy-alpha-D-galact-4-enuronosyl groups at their non-reducing ends.. The protein operates within glycan metabolism; pectin degradation; 2-dehydro-3-deoxy-D-gluconate from pectin: step 2/5. Its function is as follows. Has pectate lyase activity. The chain is Pectate lyase 3 from Ambrosia artemisiifolia (Common ragweed).